The chain runs to 196 residues: ATP-dependent Clp protease proteolytic subunit (196 aa).

The active-site Nucleophile is serine 96. The active site involves histidine 121.

This sequence belongs to the peptidase S14 family. Fourteen ClpP subunits assemble into 2 heptameric rings which stack back to back to give a disk-like structure with a central cavity, resembling the structure of eukaryotic proteasomes.

It is found in the cytoplasm. The enzyme catalyses Hydrolysis of proteins to small peptides in the presence of ATP and magnesium. alpha-casein is the usual test substrate. In the absence of ATP, only oligopeptides shorter than five residues are hydrolyzed (such as succinyl-Leu-Tyr-|-NHMec, and Leu-Tyr-Leu-|-Tyr-Trp, in which cleavage of the -Tyr-|-Leu- and -Tyr-|-Trp bonds also occurs).. Functionally, cleaves peptides in various proteins in a process that requires ATP hydrolysis. Has a chymotrypsin-like activity. Plays a major role in the degradation of misfolded proteins. The polypeptide is ATP-dependent Clp protease proteolytic subunit (Streptococcus thermophilus (strain CNRZ 1066)).